Reading from the N-terminus, the 206-residue chain is Cytochrome b6-f complex iron-sulfur subunit, chloroplastic (206 aa).

A chloroplast-targeting transit peptide spans 1–29 (MAMITSRRAAAPCKAQATRRSRVMSVVRA). A helical membrane pass occupies residues 48 to 68 (ILLGGASLPVGSLALGYGAFF). Residues 92 to 188 (ANAWLATHQK…CDVQEDGLVT (97 aa)) form the Rieske domain. 4 residues coordinate [2Fe-2S] cluster: Cys134, His136, Cys152, and His155. The cysteines at positions 139 and 154 are disulfide-linked.

Belongs to the Rieske iron-sulfur protein family. As to quaternary structure, the 4 large subunits of the cytochrome b6-f complex are cytochrome b6, subunit IV (17 kDa polypeptide, petD), cytochrome f and the Rieske protein, while the 4 small subunits are petG, petL, petM and petN. The complex functions as a dimer. [2Fe-2S] cluster serves as cofactor.

It localises to the plastid. Its subcellular location is the chloroplast thylakoid membrane. The catalysed reaction is 2 oxidized [plastocyanin] + a plastoquinol + 2 H(+)(in) = 2 reduced [plastocyanin] + a plastoquinone + 4 H(+)(out). Functionally, component of the cytochrome b6-f complex, which mediates electron transfer between photosystem II (PSII) and photosystem I (PSI), cyclic electron flow around PSI, and state transitions. This chain is Cytochrome b6-f complex iron-sulfur subunit, chloroplastic (petC), found in Volvox carteri (Green alga).